We begin with the raw amino-acid sequence, 625 residues long: MSASASACDCLVGVPTGPTLASTCGGSAFMLFMGLLEVFIRSQCDLEDPCGRASSRFRSEPDYEYDFIVIGGGSAGSVVASRLSEVPQWKVLLIEAGGDEPVGAQIPSMFLNFIGSDIDYRYNTEPEPMACLSSMEQRCYWPRGKVLGGTSVLNGMMYVRGNREDYDDWAADGNPGWAYNDVLPFFKKSEDNLDLDEVGTEYHAKGGLLPVGKFPYNPPLSYAILKAGEELGFSVHDLNGQNSTGFMIAQMTARNGIRYSSARAFLRPARMRNNLHILLNTTATKILIHPHTKNVLGVEVSDQFGSTRKILVKKEVVLSAGAVNSPHILLLSGVGPKDELQQVNVRTVHNLPGVGKNLHNHVTYFTNFFIDDADTAPLNWATAMEYLLFRDGLMSGTGISDVTAKLATRYADSPERPDLQLYFGGYLASCARTGQVGELLSNNSRSIQIFPAVLNPRSRGFIGLRSADPLEPPRIVANYLTHEQDVKTLVEGIKFVIRLSQTTPLKQYGMRLDKTVVKGCEAHAFGSDAYWECAVRQNTGPENHQAGSCKMGPSHDPMAVVNHELRVHGIRGLRVMDTSIMPKVSSGNTHAPAVMIAEKGAYLLKRAWGAKVURVDATWTLHRVI.

Residues 1 to 42 (MSASASACDCLVGVPTGPTLASTCGGSAFMLFMGLLEVFIRS) form the signal peptide. 66–95 (DFIVIGGGSAGSVVASRLSEVPQWKVLLIE) serves as a coordination point for FAD. Residue histidine 544 is the Proton acceptor of the active site. Position 613 (selenocysteine 613) is a non-standard amino acid, selenocysteine.

Belongs to the GMC oxidoreductase family. The cofactor is FAD.

Its subcellular location is the secreted. The catalysed reaction is a quinone + D-glucose = D-glucono-1,5-lactone + a quinol. Essential for cuticular modification during development. The protein is Glucose dehydrogenase [FAD, quinone] (Gld) of Drosophila melanogaster (Fruit fly).